A 201-amino-acid chain; its full sequence is Recombination protein RecR (201 aa).

The C4-type zinc-finger motif lies at 57 to 72 (CADCRTFTEQDVCNIC). A Toprim domain is found at 81–176 (GQICVVESPA…SASRIAHGVP (96 aa)).

Belongs to the RecR family.

May play a role in DNA repair. It seems to be involved in an RecBC-independent recombinational process of DNA repair. It may act with RecF and RecO. The polypeptide is Recombination protein RecR (Enterobacter sp. (strain 638)).